A 94-amino-acid polypeptide reads, in one-letter code: Large ribosomal subunit protein uL24c (94 aa).

It belongs to the universal ribosomal protein uL24 family. In terms of assembly, part of the 50S ribosomal subunit.

The protein resides in the plastid. It is found in the chloroplast. One of two assembly initiator proteins, it binds directly to the 5'-end of the 23S rRNA, where it nucleates assembly of the 50S subunit. This chain is Large ribosomal subunit protein uL24c (rpl24), found in Cyanidium caldarium (Red alga).